The chain runs to 94 residues: C-C motif chemokine 26 (94 aa).

The first 23 residues, 1 to 23 (MKSFPVAFLVLLIFILSVHRGVT), serve as a signal peptide directing secretion. Cystine bridges form between C33–C57 and C34–C73.

It belongs to the intercrine beta (chemokine CC) family. Monomer.

Its subcellular location is the secreted. Functionally, chemoattractant for eosinophils and basophils. Acts as a ligand for C-C chemokine receptor CCR3 which triggers Ca(2+) mobilization in eosinophils. Also acts as a ligand for CX3C chemokine receptor CX3CR1, inducing cell chemotaxis. This is C-C motif chemokine 26 from Canis lupus familiaris (Dog).